The sequence spans 255 residues: Imidazole glycerol phosphate synthase subunit HisF (255 aa).

Residues Asp11 and Asp130 contribute to the active site.

The protein belongs to the HisA/HisF family. In terms of assembly, heterodimer of HisH and HisF.

It is found in the cytoplasm. It carries out the reaction 5-[(5-phospho-1-deoxy-D-ribulos-1-ylimino)methylamino]-1-(5-phospho-beta-D-ribosyl)imidazole-4-carboxamide + L-glutamine = D-erythro-1-(imidazol-4-yl)glycerol 3-phosphate + 5-amino-1-(5-phospho-beta-D-ribosyl)imidazole-4-carboxamide + L-glutamate + H(+). Its pathway is amino-acid biosynthesis; L-histidine biosynthesis; L-histidine from 5-phospho-alpha-D-ribose 1-diphosphate: step 5/9. Its function is as follows. IGPS catalyzes the conversion of PRFAR and glutamine to IGP, AICAR and glutamate. The HisF subunit catalyzes the cyclization activity that produces IGP and AICAR from PRFAR using the ammonia provided by the HisH subunit. The polypeptide is Imidazole glycerol phosphate synthase subunit HisF (Synechococcus sp. (strain ATCC 27144 / PCC 6301 / SAUG 1402/1) (Anacystis nidulans)).